The following is a 186-amino-acid chain: Cytochrome b6-f complex iron-sulfur subunit (186 aa).

A helical membrane pass occupies residues 16 to 38 (LLSFVTGGAIAATTAATLYPVVL). The 90-residue stretch at 74–163 (GEPVLTLGLD…ATVSDDKVLI (90 aa)) folds into the Rieske domain. C109, H111, C127, and H130 together coordinate [2Fe-2S] cluster. A disulfide bridge links C114 with C129.

The protein belongs to the Rieske iron-sulfur protein family. In terms of assembly, the 4 large subunits of the cytochrome b6-f complex are cytochrome b6, subunit IV (17 kDa polypeptide, PetD), cytochrome f and the Rieske protein, while the 4 small subunits are PetG, PetL, PetM and PetN. The complex functions as a dimer. It depends on [2Fe-2S] cluster as a cofactor.

It is found in the cell inner membrane. The enzyme catalyses 2 oxidized [plastocyanin] + a plastoquinol + 2 H(+)(in) = 2 reduced [plastocyanin] + a plastoquinone + 4 H(+)(out). Its function is as follows. Component of the cytochrome b6-f complex, which mediates electron transfer between photosystem II (PSII) and photosystem I (PSI), cyclic electron flow around PSI, and state transitions. The protein is Cytochrome b6-f complex iron-sulfur subunit of Gloeobacter violaceus (strain ATCC 29082 / PCC 7421).